The chain runs to 251 residues: 1-(5-phosphoribosyl)-5-[(5-phosphoribosylamino)methylideneamino] imidazole-4-carboxamide isomerase (251 aa).

Asp8 acts as the Proton acceptor in catalysis. The active-site Proton donor is the Asp131.

Belongs to the HisA/HisF family.

It localises to the cytoplasm. It catalyses the reaction 1-(5-phospho-beta-D-ribosyl)-5-[(5-phospho-beta-D-ribosylamino)methylideneamino]imidazole-4-carboxamide = 5-[(5-phospho-1-deoxy-D-ribulos-1-ylimino)methylamino]-1-(5-phospho-beta-D-ribosyl)imidazole-4-carboxamide. It functions in the pathway amino-acid biosynthesis; L-histidine biosynthesis; L-histidine from 5-phospho-alpha-D-ribose 1-diphosphate: step 4/9. The chain is 1-(5-phosphoribosyl)-5-[(5-phosphoribosylamino)methylideneamino] imidazole-4-carboxamide isomerase from Burkholderia lata (strain ATCC 17760 / DSM 23089 / LMG 22485 / NCIMB 9086 / R18194 / 383).